A 45-amino-acid polypeptide reads, in one-letter code: Photosystem II reaction center protein K (45 aa).

Positions methionine 1 to alanine 8 are excised as a propeptide. A helical transmembrane segment spans residues leucine 24 to phenylalanine 44.

It belongs to the PsbK family. As to quaternary structure, PSII is composed of 1 copy each of membrane proteins PsbA, PsbB, PsbC, PsbD, PsbE, PsbF, PsbH, PsbI, PsbJ, PsbK, PsbL, PsbM, PsbT, PsbX, PsbY, PsbZ, Psb30/Ycf12, peripheral proteins PsbO, CyanoQ (PsbQ), PsbU, PsbV and a large number of cofactors. It forms dimeric complexes.

Its subcellular location is the cellular thylakoid membrane. Functionally, one of the components of the core complex of photosystem II (PSII). PSII is a light-driven water:plastoquinone oxidoreductase that uses light energy to abstract electrons from H(2)O, generating O(2) and a proton gradient subsequently used for ATP formation. It consists of a core antenna complex that captures photons, and an electron transfer chain that converts photonic excitation into a charge separation. The polypeptide is Photosystem II reaction center protein K (Synechococcus elongatus (strain ATCC 33912 / PCC 7942 / FACHB-805) (Anacystis nidulans R2)).